An 834-amino-acid polypeptide reads, in one-letter code: Copper-exporting P-type ATPase (834 aa).

The Cytoplasmic segment spans residues 2–186 (SQTIDLTLDG…TAVATMKRFR (185 aa)). 2 HMA domains span residues 3 to 64 (QTID…YDAS) and 99 to 162 (DSQQ…YGAE). Positions 14, 17, 110, and 113 each coordinate Cu(+). 2 short sequence motifs (CXXC motif) span residues 14 to 17 (CGHC) and 110 to 113 (CASC). Residues 187–207 (WQAIVALAVGIPVMVWGMIGD) traverse the membrane as a helical segment. At 208-217 (NMMVTADNRS) the chain is on the periplasmic; loop 1 side. A helical membrane pass occupies residues 218-238 (LWLVIGLITLAVMVFAGGHFY). The Cytoplasmic portion of the chain corresponds to 239–253 (RSAWKSLLNGAATMD). Residues 254–274 (TLVALGTGVAWLYSMSVNLWP) form a helical membrane-spanning segment. Residues 275-283 (QWFPMEARH) are Periplasmic; loop 2-facing. A helical transmembrane segment spans residues 284–304 (LYYEASAMIIGLINLGHMLEA). Topologically, residues 305-437 (RARQRSSKAL…EIGQLADKIS (133 aa)) are cytoplasmic. Residues 438-458 (AVFVPVVVVIALVSAAIWYFF) traverse the membrane as a helical segment. Topologically, residues 459–463 (GPAPQ) are periplasmic; loop 3. Residues 464 to 484 (IVYTLVIATTVLIIACPCALG) form a helical membrane-spanning segment. Topologically, residues 485–778 (LATPMSIISG…ATLHNMKQNL (294 aa)) are cytoplasmic. The active-site 4-aspartylphosphate intermediate is the D523. The Mg(2+) site is built by D720 and D724. Residues 779 to 799 (LGAFIYNSIGIPVAAGILWPF) traverse the membrane as a helical segment. Residue T800 is a topological domain, periplasmic; loop 4. The chain crosses the membrane as a helical span at residues 801-821 (GTLLNPVVAGAAMALSSITVV). Over 822–834 (SNANRLLRFKPKE) the chain is Cytoplasmic.

Belongs to the cation transport ATPase (P-type) (TC 3.A.3) family. Type IB subfamily. Copper-exporting P-type ATPase interacts with apo-periplasmic copper chaperone CusF; when CusF is precharged with copper it binds very little CopA. The periplasmic loops of CopA, especially the first half of loop 1, play a large role in binding to CusF.

It is found in the cell inner membrane. Its subcellular location is the cytoplasm. It carries out the reaction Cu(+)(in) + ATP + H2O = Cu(+)(out) + ADP + phosphate + H(+). With respect to regulation, export is inhibited by vanadate. Phosphorylation is inhibited by vanadate and sensitive to KOH and hydroxylamine; it is not inhibited by azide. Phosphorylation is Cu(+) not Cu(2+)-dependent. ATPase activity is inhibited by bathocuproindisulfonate (BCDS), which chelates Cu(+) but not Cu(2+), and stimulated 3-4-fold by Cu(+). ATPase activity is inhibited by Cu(2+) plus DTT or Ag(+). Its function is as follows. Exports Cu(+) from the cytoplasm to the periplasm. Binds 2 Cu(+) ions per monomer, which are transferred to periplasmic copper chaperone CusF upon ATP hydrolysis. In vitro an excess of CusF over CopA is required for efficient transfer. May also be involved in silver export. MRNA is subject to programmed ribosomal frameshifting which produces a cytoplasmic copper chaperone CopA(Z) that corresponds to the first HMA domain. The soluble form is essential for cell survivial in the presence of CuSO(4); in growth competition experiments between wild-type and a version that prevents expression of CopA(Z) after 50 generations the non-CopA(Z) version is nearly extinct. The first HMA domain (residues 1-70) can be replaced by B.subtilis Cu chaperone CopZ. The chain is Copper-exporting P-type ATPase from Escherichia coli (strain K12).